A 102-amino-acid polypeptide reads, in one-letter code: Large ribosomal subunit protein bL21 (102 aa).

This sequence belongs to the bacterial ribosomal protein bL21 family. Part of the 50S ribosomal subunit. Contacts protein L20.

This protein binds to 23S rRNA in the presence of protein L20. The polypeptide is Large ribosomal subunit protein bL21 (Listeria monocytogenes serotype 4b (strain CLIP80459)).